Here is a 514-residue protein sequence, read N- to C-terminus: Xylose import ATP-binding protein XylG (514 aa).

2 ABC transporter domains span residues 7–246 (FEMR…VGRE) and 263–508 (LEAR…IHAE). 39-46 (GENGAGKS) is an ATP binding site.

The protein belongs to the ABC transporter superfamily. Xylose importer (TC 3.A.1.2.4) family. In terms of assembly, the complex is composed of two ATP-binding proteins (XylG), two transmembrane proteins (XylH) and a solute-binding protein (XylF).

The protein localises to the cell inner membrane. It carries out the reaction D-xylose(out) + ATP + H2O = D-xylose(in) + ADP + phosphate + H(+). In terms of biological role, part of the ABC transporter complex XylFGH involved in xylose import. Responsible for energy coupling to the transport system. In Ralstonia nicotianae (strain ATCC BAA-1114 / GMI1000) (Ralstonia solanacearum), this protein is Xylose import ATP-binding protein XylG.